The chain runs to 354 residues: UDP-N-acetylglucosamine--N-acetylmuramyl-(pentapeptide) pyrophosphoryl-undecaprenol N-acetylglucosamine transferase 1 (354 aa).

UDP-N-acetyl-alpha-D-glucosamine contacts are provided by residues 12 to 14, Arg163, Ser193, and Gln287; that span reads TAG.

The protein belongs to the glycosyltransferase 28 family. MurG subfamily.

It localises to the cell membrane. It catalyses the reaction di-trans,octa-cis-undecaprenyl diphospho-N-acetyl-alpha-D-muramoyl-L-alanyl-D-glutamyl-meso-2,6-diaminopimeloyl-D-alanyl-D-alanine + UDP-N-acetyl-alpha-D-glucosamine = di-trans,octa-cis-undecaprenyl diphospho-[N-acetyl-alpha-D-glucosaminyl-(1-&gt;4)]-N-acetyl-alpha-D-muramoyl-L-alanyl-D-glutamyl-meso-2,6-diaminopimeloyl-D-alanyl-D-alanine + UDP + H(+). The protein operates within cell wall biogenesis; peptidoglycan biosynthesis. In terms of biological role, cell wall formation. Catalyzes the transfer of a GlcNAc subunit on undecaprenyl-pyrophosphoryl-MurNAc-pentapeptide (lipid intermediate I) to form undecaprenyl-pyrophosphoryl-MurNAc-(pentapeptide)GlcNAc (lipid intermediate II). The chain is UDP-N-acetylglucosamine--N-acetylmuramyl-(pentapeptide) pyrophosphoryl-undecaprenol N-acetylglucosamine transferase 1 from Bacillus thuringiensis (strain Al Hakam).